Here is a 109-residue protein sequence, read N- to C-terminus: Phosphoribosyl-ATP pyrophosphatase (109 aa).

This sequence belongs to the PRA-PH family.

Its subcellular location is the cytoplasm. It carries out the reaction 1-(5-phospho-beta-D-ribosyl)-ATP + H2O = 1-(5-phospho-beta-D-ribosyl)-5'-AMP + diphosphate + H(+). The protein operates within amino-acid biosynthesis; L-histidine biosynthesis; L-histidine from 5-phospho-alpha-D-ribose 1-diphosphate: step 2/9. This chain is Phosphoribosyl-ATP pyrophosphatase, found in Azorhizobium caulinodans (strain ATCC 43989 / DSM 5975 / JCM 20966 / LMG 6465 / NBRC 14845 / NCIMB 13405 / ORS 571).